We begin with the raw amino-acid sequence, 1111 residues long: MARSSLPNRRTAQFEANKRRTIAHAPSPSLSNGMHTLTPPTCNNGAATSDSNIHVYVRCRSRNKREIEEKSSVVISTLGPQGKEIILSNGSHQSYSSSKKTYQFDQVFGAESDQETVFNATAKNYIKEMLHGYNCTIFAYGQTGTGKTYTMSGDINILGDVQSTDNLLLGEHAGIIPRVLVDLFKELSSLNKEYSVKISFLELYNENLKDLLSDSEDDDPAVNDPKRQIRIFDNNNNNSSIMVKGMQEIFINSAHEGLNLLMQGSLKRKVAATKCNDLSSRSHTVFTITTNIVEQDSKDHGQNKNFVKIGKLNLVDLAGSENINRSGAENKRAQEAGLINKSLLTLGRVINALVDHSNHIPYRESKLTRLLQDSLGGMTKTCIIATISPAKISMEETASTLEYATRAKSIKNTPQVNQSLSKDTCLKDYIQEIEKLRNDLKNSRNKQGIFITQDQLDLYESNSILIDEQNLKIHNLREQIKKFKENYLNQLDINNLLQSEKEKLIAIIQNFNVDFSNFYSEIQKIHHTNLELMNEVIQQRDFSLENSQKQYNTNQNMQLKISQQVLQTLNTLQGSLNNYNSKCSEVIKGVTEELTRNVNTHKAKHDSTLKSLLNITTNLLMNQMNELVRSISTSLEIFQSDSTSHYRKDLNEIYQSHQQFLKNLQNDIKSCLDSIGSSILTSINEISQNCTTNLNSMNVLIENQQSGSSKLIKEQDLEIKKLKNDLINERRISNQFNQQLAEMKRYFQDHVSRTRSEFHDELNKCIDNLKDKQSKLDQDIWQKTASIFNETDIVVNKIHSDSIASLAHNAENTLKTVSQNNESFTNDLISLSRGMNMDISSKLRSLPINEFLNKISQTICETCGDDNTIASNPVLTSIKKFQNIICSDIALTNEKIMSLIDEIQSQIETISNENNINLIAINENFNSLCNFILTDYDENIMQISKTQDEVLSEHCEKLQSLKILGMDIFTAHSIEKPLHEHTRPEASVIKALPLLDYPKQFQIYRDAENKSKDDTSNSRTCIPNLSTNENFPLSQFSPKTPVPVPDQPLPKVLIPKSINSAKSNRSKTLPNTEGTGRESQNNLKRRFTTEPILKGEETENNDILQNKKLHQ.

The segment covering 1-11 has biased composition (polar residues); it reads MARSSLPNRRT. The tract at residues 1-34 is disordered; it reads MARSSLPNRRTAQFEANKRRTIAHAPSPSLSNGM. Residues 52–410 enclose the Kinesin motor domain; the sequence is NIHVYVRCRS…LEYATRAKSI (359 aa). 141–148 serves as a coordination point for ATP; that stretch reads GQTGTGKT. Coiled-coil stretches lie at residues 424-510, 648-670, 710-780, and 808-828; these read TCLK…IIQN, KDLNEIYQSHQQFLKNLQNDIKS, KLIK…DQDI, and HNAENTLKTVSQNNESFTNDL. The span at 1007-1016 shows a compositional bias: basic and acidic residues; that stretch reads AENKSKDDTS. A disordered region spans residues 1007–1111; sequence AENKSKDDTS…DILQNKKLHQ (105 aa). Polar residues-rich tracts occupy residues 1017-1038 and 1057-1082; these read NSRTCIPNLSTNENFPLSQFSP and SINSAKSNRSKTLPNTEGTGRESQNN.

This sequence belongs to the TRAFAC class myosin-kinesin ATPase superfamily. Kinesin family. BimC subfamily. In terms of assembly, might be dimeric.

The protein resides in the cytoplasm. The protein localises to the cytoskeleton. It is found in the spindle. Required for assembly of the mitotic spindle. Interacts with spindle microtubules to produce an outwardly directed force acting upon the poles. Following spindle assembly, CIN8 and KIP1 apparently act to oppose a force that draws separated poles back together. This force seems to be mediate by KAR3. The protein is Kinesin-like protein KIP1 (KIP1) of Saccharomyces cerevisiae (strain ATCC 204508 / S288c) (Baker's yeast).